Reading from the N-terminus, the 166-residue chain is Small ribosomal subunit protein uS5 (166 aa).

Residues L11 to V74 enclose the S5 DRBM domain.

This sequence belongs to the universal ribosomal protein uS5 family. As to quaternary structure, part of the 30S ribosomal subunit. Contacts proteins S4 and S8.

Functionally, with S4 and S12 plays an important role in translational accuracy. In terms of biological role, located at the back of the 30S subunit body where it stabilizes the conformation of the head with respect to the body. The sequence is that of Small ribosomal subunit protein uS5 from Histophilus somni (strain 2336) (Haemophilus somnus).